Reading from the N-terminus, the 372-residue chain is Adaptive-response sensory kinase SasA (372 aa).

Residues 147–360 (MVAHELRTPL…CFHFTVPVWQ (214 aa)) enclose the Histidine kinase domain. Histidine 150 is subject to Phosphohistidine; by autocatalysis.

As to quaternary structure, homooligomerizes. Interacts with KaiC. Participates in the KaiBC complex, whose core is composed of a KaiC homohexamer and 6 KaiB.

It catalyses the reaction ATP + protein L-histidine = ADP + protein N-phospho-L-histidine.. Its function is as follows. Member of the two-component regulatory system SasA/RpaA involved in genome-wide circadian gene expression. One of several clock output pathways. Participates in the Kai clock protein complex, the main circadian regulator in cyanobacteria, via its interaction with KaiC. KaiC enhances the autophosphorylation activity of SasA, which then transfers its phosphate group to RpaA to activate it. In addition to its output function, recruits fold-shifted KaiB (KaiB(fs)) to KaiC to cooperatively form the KaiB(6):KaiC(6) complex (independent of SasA kinase activity). Required for robustness of the circadian rhythm of gene expression and is involved in clock output, also required for adaptation to light/dark cycles. In Prochlorococcus marinus (strain MIT 9215), this protein is Adaptive-response sensory kinase SasA.